The following is a 46-amino-acid chain: Ligatoxin-B (46 aa).

3 disulfide bridges follow: C3/C40, C4/C32, and C16/C26.

Belongs to the plant thionin (TC 1.C.44) family.

It is found in the secreted. Thionins are small plant proteins which are toxic to animal cells. They seem to exert their toxic effect at the level of the cell membrane. Their precise function is not known. The protein is Ligatoxin-B of Phoradendron liga (Argentine mistletoe).